Consider the following 285-residue polypeptide: Shikimate dehydrogenase (NADP(+)) (285 aa).

Shikimate contacts are provided by residues 22–24 (SRS) and Thr-71. Lys-75 serves as the catalytic Proton acceptor. Shikimate-binding residues include Asn-96 and Asp-111. Residues 136–140 (GAGGA), 160–165 (NRTVGR), and Ile-225 each bind NADP(+). Shikimate is bound at residue Tyr-227. Gly-248 serves as a coordination point for NADP(+).

Belongs to the shikimate dehydrogenase family. In terms of assembly, homodimer.

The catalysed reaction is shikimate + NADP(+) = 3-dehydroshikimate + NADPH + H(+). It functions in the pathway metabolic intermediate biosynthesis; chorismate biosynthesis; chorismate from D-erythrose 4-phosphate and phosphoenolpyruvate: step 4/7. Its function is as follows. Involved in the biosynthesis of the chorismate, which leads to the biosynthesis of aromatic amino acids. Catalyzes the reversible NADPH linked reduction of 3-dehydroshikimate (DHSA) to yield shikimate (SA). This Rhizobium etli (strain CIAT 652) protein is Shikimate dehydrogenase (NADP(+)).